We begin with the raw amino-acid sequence, 447 residues long: Methylenetetrahydrofolate--tRNA-(uracil-5-)-methyltransferase TrmFO (447 aa).

10–15 (GAGLAG) provides a ligand contact to FAD.

Belongs to the MnmG family. TrmFO subfamily. FAD is required as a cofactor.

It localises to the cytoplasm. It catalyses the reaction uridine(54) in tRNA + (6R)-5,10-methylene-5,6,7,8-tetrahydrofolate + NADH + H(+) = 5-methyluridine(54) in tRNA + (6S)-5,6,7,8-tetrahydrofolate + NAD(+). The enzyme catalyses uridine(54) in tRNA + (6R)-5,10-methylene-5,6,7,8-tetrahydrofolate + NADPH + H(+) = 5-methyluridine(54) in tRNA + (6S)-5,6,7,8-tetrahydrofolate + NADP(+). Catalyzes the folate-dependent formation of 5-methyl-uridine at position 54 (M-5-U54) in all tRNAs. The sequence is that of Methylenetetrahydrofolate--tRNA-(uracil-5-)-methyltransferase TrmFO from Symbiobacterium thermophilum (strain DSM 24528 / JCM 14929 / IAM 14863 / T).